The sequence spans 256 residues: Isoprenyl transferase (256 aa).

The interval 1 to 22 (MLEKFSKWKGNRSNHTTPSHSL) is disordered. D36 is a catalytic residue. D36 lines the Mg(2+) pocket. Substrate contacts are provided by residues 37-40 (GNGR), W41, R49, H53, and 81-83 (STE). N84 functions as the Proton acceptor in the catalytic mechanism. Substrate is bound by residues W85, R87, R204, and 210–212 (RLS). E223 is a binding site for Mg(2+).

Belongs to the UPP synthase family. As to quaternary structure, homodimer. Mg(2+) is required as a cofactor.

Catalyzes the condensation of isopentenyl diphosphate (IPP) with allylic pyrophosphates generating different type of terpenoids. The protein is Isoprenyl transferase of Halalkalibacterium halodurans (strain ATCC BAA-125 / DSM 18197 / FERM 7344 / JCM 9153 / C-125) (Bacillus halodurans).